Consider the following 64-residue polypeptide: Lantibiotic actagardine (64 aa).

A propeptide spanning residues 1–45 (MSALAIEKSWKDVDLRDGATSHPAGLGFGELTFEDLREDRTIYAA) is cleaved from the precursor. Residues 46–51 (SSGWVC) constitute a cross-link (lanthionine (Ser-Cys)). 2 cross-links (beta-methyllanthionine (Thr-Cys)) span residues 52-57 (TLTIEC) and 54-62 (TIECGTVIC). Residues 59-64 (TVICAC) constitute a cross-link (beta-methyllanthionine sulfoxide (Thr-Cys)).

It belongs to the type B lantibiotic family. In terms of processing, maturation of lantibiotics involves the enzymatic conversion of Thr, and Ser into dehydrated AA by the enzyme garM and the formation of thioether bonds with cysteine. The 59-64 beta-methyllanthionine thioether bond is oxidized to a sulfoxide by the monooxygenase GarO. This is followed by membrane translocation and cleavage of the modified precursor. Post-translationally, the sulfoxide group of the 59-64 beta-methyllanthionine thioether bond is mildly important for activity, since the antibacterial activity of deoxyactagardine is marginally lower compared with oxidized actagardine.

Functionally, has potent antibacterial activity against some Gram-positive bacteria. Has good antistreptococcal activity. Inhibits cell wall biosynthesis by binding to lipid II and blocking transglycosylation. The polypeptide is Lantibiotic actagardine (Actinoplanes garbadinensis).